The chain runs to 430 residues: Trigger factor (430 aa).

The PPIase FKBP-type domain occupies 157–242 (GDLVALETWS…AVEVSEPVLP (86 aa)).

The protein belongs to the FKBP-type PPIase family. Tig subfamily.

It localises to the cytoplasm. It catalyses the reaction [protein]-peptidylproline (omega=180) = [protein]-peptidylproline (omega=0). Its function is as follows. Involved in protein export. Acts as a chaperone by maintaining the newly synthesized protein in an open conformation. Functions as a peptidyl-prolyl cis-trans isomerase. In Xanthomonas euvesicatoria pv. vesicatoria (strain 85-10) (Xanthomonas campestris pv. vesicatoria), this protein is Trigger factor.